Reading from the N-terminus, the 153-residue chain is SKP1-like protein 9 (153 aa).

Residues 95 to 153 (IKAANYLNIKSLFDLACQTVAEIIKGNTPEQIREFFNIENDLTPEEEAAIRRENKWAFE) form an interaction with the F-box domain of F-box proteins region.

This sequence belongs to the SKP1 family. As to quaternary structure, part of a SCF (SKP1-cullin-F-box) protein ligase complex. Interacts with CPR1/CPR30 and At3g61590. Expressed in leaves, shoot apical meristem (SAM), roots, flowers and pollen.

The protein localises to the nucleus. It participates in protein modification; protein ubiquitination. Functionally, involved in ubiquitination and subsequent proteasomal degradation of target proteins. Together with CUL1, RBX1 and a F-box protein, it forms a SCF E3 ubiquitin ligase complex. The functional specificity of this complex depends on the type of F-box protein. In the SCF complex, it serves as an adapter that links the F-box protein to CUL1. In Arabidopsis thaliana (Mouse-ear cress), this protein is SKP1-like protein 9 (ASK9).